The following is a 468-amino-acid chain: 6-phospho-beta-galactosidase (468 aa).

D-galactose 6-phosphate contacts are provided by Q19, H116, N159, E160, and N297. Catalysis depends on E160, which acts as the Proton donor. E375 acts as the Nucleophile in catalysis. D-galactose 6-phosphate-binding residues include S428, W429, K435, and Y437.

The protein belongs to the glycosyl hydrolase 1 family.

The enzyme catalyses a 6-phospho-beta-D-galactoside + H2O = D-galactose 6-phosphate + an alcohol. It participates in carbohydrate metabolism; lactose degradation; D-galactose 6-phosphate and beta-D-glucose from lactose 6-phosphate: step 1/1. The polypeptide is 6-phospho-beta-galactosidase (Streptococcus agalactiae serotype III (strain NEM316)).